Here is a 344-residue protein sequence, read N- to C-terminus: L-rhamnose-proton symporter (344 aa).

The next 10 helical transmembrane spans lie at 4-24 (AITMGIFWHLIGAASAACFYA), 38-58 (WSVGGIVSWLILPWAISATLL), 68-88 (FSASTLLPVFLFGAMWGIGNI), 101-121 (MGIGIAIGITLIVGTLMTPII), 131-151 (TQGGQMTLLGVLVAVIGVGIV), 175-195 (LLLAVMCGIFSAGMSFAMNAA), 214-234 (LPSYVVIMGGGALVNLGFCFI), 259-279 (LLLSALGGLMWYLQFFFYAWG), 290-310 (MSWMLHMSFYVLCGGVVGLVL), and 323-343 (VLSLGCVVIIIAANIVGLGMA).

This sequence belongs to the L-rhamnose transporter (TC 2.A.7.6) family.

It localises to the cell inner membrane. The catalysed reaction is L-rhamnopyranose(in) + H(+)(in) = L-rhamnopyranose(out) + H(+)(out). In terms of biological role, uptake of L-rhamnose across the cytoplasmic membrane with the concomitant transport of protons into the cell (symport system). In Klebsiella pneumoniae subsp. pneumoniae (strain ATCC 700721 / MGH 78578), this protein is L-rhamnose-proton symporter.